Here is a 182-residue protein sequence, read N- to C-terminus: Glycerol-3-phosphate acyltransferase 1 (182 aa).

The next 5 membrane-spanning stretches (helical) occupy residues 5–25 (MQFL…AYIV), 54–74 (GYFI…VAVA), 81–101 (PTFV…PVLF), 117–137 (IAFD…FYLI), and 157–177 (ILYS…VLIL).

The protein belongs to the PlsY family. As to quaternary structure, probably interacts with PlsX.

Its subcellular location is the cell membrane. It catalyses the reaction an acyl phosphate + sn-glycerol 3-phosphate = a 1-acyl-sn-glycero-3-phosphate + phosphate. The protein operates within lipid metabolism; phospholipid metabolism. Functionally, catalyzes the transfer of an acyl group from acyl-phosphate (acyl-PO(4)) to glycerol-3-phosphate (G3P) to form lysophosphatidic acid (LPA). This enzyme utilizes acyl-phosphate as fatty acyl donor, but not acyl-CoA or acyl-ACP. The polypeptide is Glycerol-3-phosphate acyltransferase 1 (Bacillus cereus (strain ATCC 14579 / DSM 31 / CCUG 7414 / JCM 2152 / NBRC 15305 / NCIMB 9373 / NCTC 2599 / NRRL B-3711)).